The primary structure comprises 594 residues: Glutamate decarboxylase 1 (594 aa).

Residues 1 to 13 (MASSTPSSSATSS) show a composition bias toward low complexity. The disordered stretch occupies residues 1–23 (MASSTPSSSATSSNAGADPNTTN). Ser-78 bears the Phosphoserine mark. 190-192 (QLS) contacts 4-aminobutanoate. An N6-(pyridoxal phosphate)lysine modification is found at Lys-405. Arg-567 lines the 4-aminobutanoate pocket.

The protein belongs to the group II decarboxylase family. Homodimer. The cofactor is pyridoxal 5'-phosphate.

It carries out the reaction L-glutamate + H(+) = 4-aminobutanoate + CO2. Functionally, catalyzes the synthesis of the inhibitory neurotransmitter gamma-aminobutyric acid (GABA) with pyridoxal 5'-phosphate as cofactor. This chain is Glutamate decarboxylase 1 (GAD1), found in Pan troglodytes (Chimpanzee).